The primary structure comprises 471 residues: Argininosuccinate lyase (471 aa).

The protein belongs to the lyase 1 family. Argininosuccinate lyase subfamily.

The protein localises to the cytoplasm. The enzyme catalyses 2-(N(omega)-L-arginino)succinate = fumarate + L-arginine. Its pathway is amino-acid biosynthesis; L-arginine biosynthesis; L-arginine from L-ornithine and carbamoyl phosphate: step 3/3. This Ralstonia pickettii (strain 12J) protein is Argininosuccinate lyase.